The following is a 141-amino-acid chain: Large ribosomal subunit protein uL16 (141 aa).

It belongs to the universal ribosomal protein uL16 family. In terms of assembly, part of the 50S ribosomal subunit.

Binds 23S rRNA and is also seen to make contacts with the A and possibly P site tRNAs. In Nostoc punctiforme (strain ATCC 29133 / PCC 73102), this protein is Large ribosomal subunit protein uL16.